The sequence spans 534 residues: Allene oxide synthase 1, chloroplastic (534 aa).

2 disordered regions span residues 1–31 and 43–71; these read MAST…SSYR and EIPP…LPAQ. The N-terminal 69 residues, 1–69, are a transit peptide targeting the chloroplast; that stretch reads MASTSLSLPS…SPPVKQAKLP (69 aa). Composition is skewed to low complexity over residues 17-31 and 43-62; these read SHTS…SSYR and EIPP…SSPP. Heme b is bound by residues Lys-149, His-180, and Lys-184. Residues Asn-337 and Lys-343 each coordinate (13S)-hydroperoxy-(9Z,11E)-octadecadienoate. Asn-337 is a binding site for (13S)-hydroperoxy-(9Z,11E,15Z)-octadecatrienoate. Residues Lys-485 and Cys-487 each contribute to the heme b site.

Belongs to the cytochrome P450 family. Heme b is required as a cofactor. As to expression, expressed in flowers. Detected in stems and roots, but not in leaves and fruits under non-inducing conditions.

Its subcellular location is the plastid. The protein localises to the chloroplast. It catalyses the reaction (13S)-hydroperoxy-(9Z,11E,15Z)-octadecatrienoate = (9Z,13S,15Z)-12,13-epoxyoctadeca-9,11,15-trienoate + H2O. It carries out the reaction (13S)-hydroperoxy-(9Z,11E)-octadecadienoate = (9Z,13S)-12,13-epoxyoctadeca-9,11-dienoate + H2O. In terms of biological role, cytochrome P450 of the CYP74A subfamily involved in the biosynthesis of jasmonic acid from lipoxygenase-derived hydroperoxides of free fatty acids. Catalyzes the synthesis of unstable allene oxide, which is further converted spontaneously by hydrolysis or cyclization. Can use 13S-hydroperoxy-9(Z),11(E),15(Z)-octadecatrienoic acid (13-HPOT) and 13S-hydroperoxy-9(Z),11(E)-octadecadienoic acid (13-HPOD) as substrates. This chain is Allene oxide synthase 1, chloroplastic, found in Solanum lycopersicum (Tomato).